A 472-amino-acid polypeptide reads, in one-letter code: Nucleoporin NUP49/NSP49 (472 aa).

Residues 2 to 3 (FG) form an FG 1 repeat. A GLFG 1 repeat occupies 14-17 (GLFG). Residues 28-104 (NTGFSFGGTQ…TANTGGGLFG (77 aa)) form a disordered region. One copy of the FG 2 repeat lies at 33–34 (FG). One copy of the GLFG 2 repeat lies at 48-51 (GLFG). Residues 64 to 80 (SFGQQQQQSQTNAFGGS) are compositionally biased toward low complexity. 2 FG repeats span residues 65–66 (FG) and 77–78 (FG). GLFG repeat units lie at residues 86-89 (GLFG) and 101-104 (GLFG). Residues 113–116 (SLFG) form an SLFG 1 repeat. 2 GLFG repeats span residues 125–128 (GLFG) and 148–151 (GLFG). One copy of the SLFG 2 repeat lies at 159–162 (SLFG). One copy of the GLFG 7; approximate repeat lies at 175–178 (GMFG). The stretch at 185-188 (SLFG) is one SLFG 3 repeat. The GLFG 8 repeat unit spans residues 199 to 202 (GLFG). An SLFG 4 repeat occupies 210–213 (SLFG). A disordered region spans residues 211–242 (LFGSSNNNNNNNNSNNIMSASGGLFGNQQQQL). A compositionally biased stretch (low complexity) spans 214–226 (SSNNNNNNNNSNN). A GLFG 9 repeat occupies 233 to 236 (GLFG).

The protein belongs to the nucleoporin GLFG family. Component of the nuclear pore complex (NPC). NPC constitutes the exclusive means of nucleocytoplasmic transport. NPCs allow the passive diffusion of ions and small molecules and the active, nuclear transport receptor-mediated bidirectional transport of macromolecules such as proteins, RNAs, ribonucleoparticles (RNPs), and ribosomal subunits across the nuclear envelope. Due to its 8-fold rotational symmetry, all subunits are present with 8 copies or multiples thereof. NUP49 is part of the NUP57 subcomplex (NIC96, NSP1, NUP49, NUP57) interacting with NUP57. Interacts through its FG repeats with karyopherins.

The protein resides in the nucleus. It localises to the nuclear pore complex. The protein localises to the nucleus membrane. In terms of biological role, functions as a component of the nuclear pore complex (NPC). NPC components, collectively referred to as nucleoporins (NUPs), can play the role of both NPC structural components and of docking or interaction partners for transiently associated nuclear transport factors. Active directional transport is assured by both, a Phe-Gly (FG) repeat affinity gradient for these transport factors across the NPC and a transport cofactor concentration gradient across the nuclear envelope (GSP1 and GSP2 GTPases associated predominantly with GTP in the nucleus, with GDP in the cytoplasm). NUP49 plays an important role in several nuclear transport pathways including poly(A)+ RNA, tRNA, and pre-ribosome transport. This Saccharomyces cerevisiae (strain ATCC 204508 / S288c) (Baker's yeast) protein is Nucleoporin NUP49/NSP49 (NUP49).